The primary structure comprises 188 residues: Oleosin S2-2 (188 aa).

Ala-2 bears the N-acetylalanine mark. The segment at 2–51 (ATVERRVQVDPTDKRIHLQPQYEGDVGYGYGYGGRADYKSSGPSSNQIVA) is polar. Transmembrane regions (helical) follow at residues 49–69 (IVALIVGVPVGGSLLALAGLT), 74–94 (VIGLMLSVPLFLLFSPVIVPA), and 96–116 (ITIGLAVTAILASGLFGLTGL). Positions 52–125 (LIVGVPVGGS…LSSVSWVLNY (74 aa)) are hydrophobic. The segment at 164–188 (DKAHEAHDTSLTTETTEPGKTRRHT) is disordered. Polar residues predominate over residues 172-181 (TSLTTETTEP).

The protein belongs to the oleosin family.

The protein resides in the lipid droplet. It localises to the membrane. May have a structural role to stabilize the lipid body during desiccation of the seed by preventing coalescence of the oil. Probably interacts with both lipid and phospholipid moieties of lipid bodies. May also provide recognition signals for specific lipase anchorage in lipolysis during seedling growth. In Brassica napus (Rape), this protein is Oleosin S2-2 (S2).